The primary structure comprises 265 residues: MLSLSEAIILGIVQGLAEWLPISSEGMTSLVMVTFFGRSLSEAIPISIWLHLGTLLAAIVYFREDVKVLLYGVPDYVRSFSRKQPHDPVISFLLISTALTGIVGLPLLLFVTDNVEISGGSATAVIGIMLIVTGILQRTVSRDESLSRVPGMSDSLVSGVAQGFAAIPGISRSGITMSALLLRKFDAADAIRLSFLMSIPAVLVAEIGVGLMGMVELDINSIVGLFFAFAFGLVTIDLFLKVAKKVDFSYFCIGLGVLSVLTMFL.

7 helical membrane-spanning segments follow: residues 42–62 (EAIPISIWLHLGTLLAAIVYF), 90–110 (ISFLLISTALTGIVGLPLLLF), 115–135 (VEISGGSATAVIGIMLIVTGI), 160–182 (VAQGFAAIPGISRSGITMSALLL), 195–215 (FLMSIPAVLVAEIGVGLMGMV), 222–242 (IVGLFFAFAFGLVTIDLFLKV), and 245–265 (KVDFSYFCIGLGVLSVLTMFL).

This sequence belongs to the UppP family.

It localises to the cell membrane. It catalyses the reaction di-trans,octa-cis-undecaprenyl diphosphate + H2O = di-trans,octa-cis-undecaprenyl phosphate + phosphate + H(+). In terms of biological role, catalyzes the dephosphorylation of undecaprenyl diphosphate (UPP). This Methanococcoides burtonii (strain DSM 6242 / NBRC 107633 / OCM 468 / ACE-M) protein is Undecaprenyl-diphosphatase.